The primary structure comprises 313 residues: ADP-L-glycero-D-manno-heptose-6-epimerase (313 aa).

Residues 10–11 (MI), 31–32 (DN), Lys-38, Lys-53, 75–79 (EGACS), and Asn-92 each bind NADP(+). Catalysis depends on Tyr-139, which acts as the Proton acceptor. Position 143 (Lys-143) interacts with NADP(+). Asn-174 contributes to the substrate binding site. Residues Val-175 and Lys-183 each coordinate NADP(+). Lys-183 serves as the catalytic Proton acceptor. Substrate contacts are provided by residues Ser-185, His-192, 206 to 209 (FEGS), Arg-214, and Tyr-277.

It belongs to the NAD(P)-dependent epimerase/dehydratase family. HldD subfamily. Homopentamer. It depends on NADP(+) as a cofactor.

It carries out the reaction ADP-D-glycero-beta-D-manno-heptose = ADP-L-glycero-beta-D-manno-heptose. It participates in nucleotide-sugar biosynthesis; ADP-L-glycero-beta-D-manno-heptose biosynthesis; ADP-L-glycero-beta-D-manno-heptose from D-glycero-beta-D-manno-heptose 7-phosphate: step 4/4. In terms of biological role, catalyzes the interconversion between ADP-D-glycero-beta-D-manno-heptose and ADP-L-glycero-beta-D-manno-heptose via an epimerization at carbon 6 of the heptose. This chain is ADP-L-glycero-D-manno-heptose-6-epimerase, found in Aliivibrio fischeri (strain ATCC 700601 / ES114) (Vibrio fischeri).